Consider the following 255-residue polypeptide: MSVTPIEELPSLGDALEDAKRAASYRAVDENLDPAKHRVVGIGSGSTVVYVAERIGKYQASPELKAKVEFICIPTGFQSRQLILDNGLRLGSIEQYPEVDIAFDGADEVDPELNLIKGGGACLFQEKLVSTSSAQFIVVADSRKRSPQRLGTSWTRGVPVEVVPSAYVRVLRDLHGIPGCRSAQLRLGEPGKAGPVVTDNNNLLIDADFGPLEDPAALHARIKALVGVVETGIFAGNAAKAYFGSADGSTQTLAR.

Belongs to the ribose 5-phosphate isomerase family.

It is found in the cytoplasm. The enzyme catalyses aldehydo-D-ribose 5-phosphate = D-ribulose 5-phosphate. Its pathway is carbohydrate degradation; pentose phosphate pathway; D-ribose 5-phosphate from D-ribulose 5-phosphate (non-oxidative stage): step 1/1. This Eremothecium gossypii (strain ATCC 10895 / CBS 109.51 / FGSC 9923 / NRRL Y-1056) (Yeast) protein is Ribose-5-phosphate isomerase (RKI1).